We begin with the raw amino-acid sequence, 305 residues long: UDP-3-O-acyl-N-acetylglucosamine deacetylase (305 aa).

Zn(2+) is bound by residues His78, His237, and Asp241. The Proton donor role is filled by His264.

The protein belongs to the LpxC family. Requires Zn(2+) as cofactor.

The enzyme catalyses a UDP-3-O-[(3R)-3-hydroxyacyl]-N-acetyl-alpha-D-glucosamine + H2O = a UDP-3-O-[(3R)-3-hydroxyacyl]-alpha-D-glucosamine + acetate. It functions in the pathway glycolipid biosynthesis; lipid IV(A) biosynthesis; lipid IV(A) from (3R)-3-hydroxytetradecanoyl-[acyl-carrier-protein] and UDP-N-acetyl-alpha-D-glucosamine: step 2/6. Catalyzes the hydrolysis of UDP-3-O-myristoyl-N-acetylglucosamine to form UDP-3-O-myristoylglucosamine and acetate, the committed step in lipid A biosynthesis. This Burkholderia pseudomallei (strain 668) protein is UDP-3-O-acyl-N-acetylglucosamine deacetylase.